A 560-amino-acid chain; its full sequence is Formate--tetrahydrofolate ligase (560 aa).

Residue 69-76 participates in ATP binding; the sequence is TPAGEGKS.

It belongs to the formate--tetrahydrofolate ligase family.

The catalysed reaction is (6S)-5,6,7,8-tetrahydrofolate + formate + ATP = (6R)-10-formyltetrahydrofolate + ADP + phosphate. It participates in one-carbon metabolism; tetrahydrofolate interconversion. The protein is Formate--tetrahydrofolate ligase of Listeria monocytogenes serotype 4b (strain CLIP80459).